Reading from the N-terminus, the 752-residue chain is Ribosomal protein S6 kinase 2 alpha (752 aa).

One can recognise a Protein kinase 1 domain in the interval 80-339 (FELLKVLGQG…AEEIKRHPFY (260 aa)). ATP-binding positions include 86–94 (LGQGSFGKV) and lysine 112. The Proton acceptor role is filled by aspartate 205. Residue serine 239 is modified to Phosphoserine. The AGC-kinase C-terminal domain occupies 340–409 (STIDWNKLYR…VATGLMEDSK (70 aa)). A Phosphothreonine modification is found at threonine 377. Position 381 is a phosphoserine (serine 381). Serine 398 carries the phosphoserine; by autocatalysis modification. The Protein kinase 2 domain occupies 435-692 (YVVKEAIGVG…AKQVLQHPWI (258 aa)). ATP-binding positions include 441–449 (IGVGSYSVC) and lysine 464. Aspartate 552 functions as the Proton acceptor in the catalytic mechanism. The residue at position 590 (threonine 590) is a Phosphothreonine. A Phosphoserine modification is found at serine 749.

The protein belongs to the protein kinase superfamily. AGC Ser/Thr protein kinase family. S6 kinase subfamily. The cofactor is Mg(2+). In terms of processing, autophosphorylated on Ser-398, as part of the activation process. In terms of tissue distribution, small and large intestine, spleen, stomach, and bursa, and to a lesser extent lung and kidney.

It carries out the reaction L-seryl-[protein] + ATP = O-phospho-L-seryl-[protein] + ADP + H(+). The enzyme catalyses L-threonyl-[protein] + ATP = O-phospho-L-threonyl-[protein] + ADP + H(+). Activated by multiple phosphorylations on threonine and serine residues. Serine/threonine kinase that may play a role in mediating the growth-factor and stress induced activation of transcription. This chain is Ribosomal protein S6 kinase 2 alpha (RPS6KA), found in Gallus gallus (Chicken).